The sequence spans 135 residues: Large ribosomal subunit protein uL16c (135 aa).

It belongs to the universal ribosomal protein uL16 family. As to quaternary structure, part of the 50S ribosomal subunit.

The protein localises to the plastid. It localises to the chloroplast. This Vitis vinifera (Grape) protein is Large ribosomal subunit protein uL16c.